We begin with the raw amino-acid sequence, 477 residues long: 3-succinoylsemialdehyde-pyridine dehydrogenase (477 aa).

202-208 (GDGPGVG) lines the NAD(+) pocket. Catalysis depends on residues E246 and C280.

This sequence belongs to the aldehyde dehydrogenase family.

It catalyses the reaction 4-oxo-4-(pyridin-3-yl)butanal + NADP(+) + H2O = 4-oxo-4-(pyridin-3-yl)butanoate + NADPH + 2 H(+). The protein operates within alkaloid degradation; nicotine degradation. Its function is as follows. Catalyzes the dehydrogenation of 3-succinoylsemialdehyde-pyridine to 3-succinoyl-pyridine in the nicotine degradation pathway. This chain is 3-succinoylsemialdehyde-pyridine dehydrogenase (ald), found in Pseudomonas sp.